The sequence spans 377 residues: UPF0754 membrane protein GK0639 (377 aa).

Helical transmembrane passes span 7 to 27 and 357 to 377; these read LLFM…IAIV and YLGA…GLWL.

It belongs to the UPF0754 family.

The protein resides in the cell membrane. In Geobacillus kaustophilus (strain HTA426), this protein is UPF0754 membrane protein GK0639.